The chain runs to 103 residues: Large ribosomal subunit protein bL21 (103 aa).

Belongs to the bacterial ribosomal protein bL21 family. In terms of assembly, part of the 50S ribosomal subunit. Contacts protein L20.

In terms of biological role, this protein binds to 23S rRNA in the presence of protein L20. This is Large ribosomal subunit protein bL21 from Borreliella burgdorferi (strain ZS7) (Borrelia burgdorferi).